The sequence spans 220 residues: MRVKICGITQPEQGRAIANLGANTLGFICVAQSPRYVTPNQIREIIEQLPPLVDKIGVFVNAPATEIINIVAQTGLTGVQLHGDETPEMCQQLKISLPDVEIIRALRIKSSQSLREVALYFDSVNTLLLDAYHPHLFGGTGATIDWEILAQFKSPIPWLLAGGLKPDNLVSALSQLSPHGIDLSSGVERAPGDKDLDKVAELFQQLHRWKSNFKEKLMEN.

This sequence belongs to the TrpF family.

The catalysed reaction is N-(5-phospho-beta-D-ribosyl)anthranilate = 1-(2-carboxyphenylamino)-1-deoxy-D-ribulose 5-phosphate. It functions in the pathway amino-acid biosynthesis; L-tryptophan biosynthesis; L-tryptophan from chorismate: step 3/5. This chain is N-(5'-phosphoribosyl)anthranilate isomerase, found in Gloeothece citriformis (strain PCC 7424) (Cyanothece sp. (strain PCC 7424)).